Here is a 318-residue protein sequence, read N- to C-terminus: NADH-ubiquinone oxidoreductase chain 1 (318 aa).

The next 8 helical transmembrane spans lie at 2 to 22, 70 to 90, 100 to 120, 136 to 156, 171 to 191, 231 to 251, 253 to 273, and 294 to 314; these read FLMN…FLTL, MFIL…IPMP, LGVL…LWSG, VAQT…IMML, HLWL…STLA, IIMM…NPLF, ELFT…FLWV, and LPLT…LAGI.

The protein belongs to the complex I subunit 1 family.

It localises to the mitochondrion inner membrane. The enzyme catalyses a ubiquinone + NADH + 5 H(+)(in) = a ubiquinol + NAD(+) + 4 H(+)(out). Functionally, core subunit of the mitochondrial membrane respiratory chain NADH dehydrogenase (Complex I) that is believed to belong to the minimal assembly required for catalysis. Complex I functions in the transfer of electrons from NADH to the respiratory chain. The immediate electron acceptor for the enzyme is believed to be ubiquinone. The chain is NADH-ubiquinone oxidoreductase chain 1 (MT-ND1) from Priodontes maximus (Giant armadillo).